Consider the following 93-residue polypeptide: Pyrimidine/purine nucleoside phosphorylase (93 aa).

Belongs to the nucleoside phosphorylase PpnP family.

The catalysed reaction is a purine D-ribonucleoside + phosphate = a purine nucleobase + alpha-D-ribose 1-phosphate. It catalyses the reaction adenosine + phosphate = alpha-D-ribose 1-phosphate + adenine. It carries out the reaction cytidine + phosphate = cytosine + alpha-D-ribose 1-phosphate. The enzyme catalyses guanosine + phosphate = alpha-D-ribose 1-phosphate + guanine. The catalysed reaction is inosine + phosphate = alpha-D-ribose 1-phosphate + hypoxanthine. It catalyses the reaction thymidine + phosphate = 2-deoxy-alpha-D-ribose 1-phosphate + thymine. It carries out the reaction uridine + phosphate = alpha-D-ribose 1-phosphate + uracil. The enzyme catalyses xanthosine + phosphate = alpha-D-ribose 1-phosphate + xanthine. Functionally, catalyzes the phosphorolysis of diverse nucleosides, yielding D-ribose 1-phosphate and the respective free bases. Can use uridine, adenosine, guanosine, cytidine, thymidine, inosine and xanthosine as substrates. Also catalyzes the reverse reactions. This is Pyrimidine/purine nucleoside phosphorylase from Pseudoalteromonas atlantica (strain T6c / ATCC BAA-1087).